The primary structure comprises 216 residues: Large ribosomal subunit protein uL3 (216 aa).

A disordered region spans residues 137-158 (GASHGAHKNHRKPGSIGGASTP).

This sequence belongs to the universal ribosomal protein uL3 family. As to quaternary structure, part of the 50S ribosomal subunit. Forms a cluster with proteins L14 and L19.

Functionally, one of the primary rRNA binding proteins, it binds directly near the 3'-end of the 23S rRNA, where it nucleates assembly of the 50S subunit. This is Large ribosomal subunit protein uL3 from Arthrobacter sp. (strain FB24).